The following is a 405-amino-acid chain: Probable tRNA sulfurtransferase (405 aa).

In terms of domain architecture, THUMP spans 60 to 165 (QEVSASLKKI…PDAAYISHEE (106 aa)). Residues 183 to 184 (ML), 208 to 209 (HF), R265, G287, and Q296 each bind ATP.

It belongs to the ThiI family.

Its subcellular location is the cytoplasm. It carries out the reaction [ThiI sulfur-carrier protein]-S-sulfanyl-L-cysteine + a uridine in tRNA + 2 reduced [2Fe-2S]-[ferredoxin] + ATP + H(+) = [ThiI sulfur-carrier protein]-L-cysteine + a 4-thiouridine in tRNA + 2 oxidized [2Fe-2S]-[ferredoxin] + AMP + diphosphate. The catalysed reaction is [ThiS sulfur-carrier protein]-C-terminal Gly-Gly-AMP + S-sulfanyl-L-cysteinyl-[cysteine desulfurase] + AH2 = [ThiS sulfur-carrier protein]-C-terminal-Gly-aminoethanethioate + L-cysteinyl-[cysteine desulfurase] + A + AMP + 2 H(+). Its pathway is cofactor biosynthesis; thiamine diphosphate biosynthesis. Catalyzes the ATP-dependent transfer of a sulfur to tRNA to produce 4-thiouridine in position 8 of tRNAs, which functions as a near-UV photosensor. Also catalyzes the transfer of sulfur to the sulfur carrier protein ThiS, forming ThiS-thiocarboxylate. This is a step in the synthesis of thiazole, in the thiamine biosynthesis pathway. The sulfur is donated as persulfide by IscS. This is Probable tRNA sulfurtransferase from Streptococcus suis (strain 98HAH33).